The sequence spans 215 residues: Chaperone protein TorD (215 aa).

It belongs to the TorD/DmsD family. TorD subfamily.

Its subcellular location is the cytoplasm. In terms of biological role, involved in the biogenesis of TorA. Acts on TorA before the insertion of the molybdenum cofactor and, as a result, probably favors a conformation of the apoenzyme that is competent for acquiring the cofactor. This Vibrio atlanticus (strain LGP32) (Vibrio splendidus (strain Mel32)) protein is Chaperone protein TorD.